The chain runs to 460 residues: L-seryl-tRNA(Sec) selenium transferase (460 aa).

Position 293 is an N6-(pyridoxal phosphate)lysine (K293).

The protein belongs to the SelA family. The cofactor is pyridoxal 5'-phosphate.

The protein resides in the cytoplasm. The enzyme catalyses L-seryl-tRNA(Sec) + selenophosphate + H(+) = L-selenocysteinyl-tRNA(Sec) + phosphate. It participates in aminoacyl-tRNA biosynthesis; selenocysteinyl-tRNA(Sec) biosynthesis; selenocysteinyl-tRNA(Sec) from L-seryl-tRNA(Sec) (bacterial route): step 1/1. Functionally, converts seryl-tRNA(Sec) to selenocysteinyl-tRNA(Sec) required for selenoprotein biosynthesis. The chain is L-seryl-tRNA(Sec) selenium transferase from Haemophilus ducreyi (strain 35000HP / ATCC 700724).